The chain runs to 82 residues: Polyketide biosynthesis acyl-carrier-protein AcpK (82 aa).

The region spanning 4–79 is the Carrier domain; that stretch reads QRIFEVLITN…ELAEVLYDKV (76 aa). Residue serine 39 is modified to O-(pantetheine 4'-phosphoryl)serine.

4'-phosphopantetheine is transferred from CoA to a specific serine of apo-ACP by sfp.

It localises to the cytoplasm. It functions in the pathway antibiotic biosynthesis; bacillaene biosynthesis. Its function is as follows. Involved in some intermediate steps for the synthesis of the antibiotic polyketide bacillaene which is involved in secondary metabolism. This Bacillus subtilis (strain 168) protein is Polyketide biosynthesis acyl-carrier-protein AcpK (acpK).